A 251-amino-acid chain; its full sequence is Hydroxyacylglutathione hydrolase (251 aa).

Zn(2+) contacts are provided by histidine 53, histidine 55, aspartate 57, histidine 58, histidine 110, aspartate 127, and histidine 165.

Belongs to the metallo-beta-lactamase superfamily. Glyoxalase II family. As to quaternary structure, monomer. Requires Zn(2+) as cofactor.

The enzyme catalyses an S-(2-hydroxyacyl)glutathione + H2O = a 2-hydroxy carboxylate + glutathione + H(+). Its pathway is secondary metabolite metabolism; methylglyoxal degradation; (R)-lactate from methylglyoxal: step 2/2. Thiolesterase that catalyzes the hydrolysis of S-D-lactoyl-glutathione to form glutathione and D-lactic acid. This chain is Hydroxyacylglutathione hydrolase, found in Shigella boydii serotype 4 (strain Sb227).